A 294-amino-acid chain; its full sequence is Hydroxyethylthiazole kinase (294 aa).

Residue methionine 57 participates in substrate binding. 2 residues coordinate ATP: arginine 132 and serine 196. Residue glycine 223 participates in substrate binding.

It belongs to the Thz kinase family. It depends on Mg(2+) as a cofactor.

The enzyme catalyses 5-(2-hydroxyethyl)-4-methylthiazole + ATP = 4-methyl-5-(2-phosphooxyethyl)-thiazole + ADP + H(+). It participates in cofactor biosynthesis; thiamine diphosphate biosynthesis; 4-methyl-5-(2-phosphoethyl)-thiazole from 5-(2-hydroxyethyl)-4-methylthiazole: step 1/1. Catalyzes the phosphorylation of the hydroxyl group of 4-methyl-5-beta-hydroxyethylthiazole (THZ). The chain is Hydroxyethylthiazole kinase from Bifidobacterium adolescentis (strain ATCC 15703 / DSM 20083 / NCTC 11814 / E194a).